A 291-amino-acid chain; its full sequence is Phosphatidylglycerol--prolipoprotein diacylglyceryl transferase (291 aa).

Helical transmembrane passes span 21–41 (VALHWYGLMYLVGFVFAMWLA), 60–80 (LLYAGFLGVFLGGRIGYVLFY), 96–116 (WDGGMSFHGGLIGVILVMIIF), 130–150 (FIAPLIPFGLGAGRLGNFING), 198–218 (SQLYELALEGVVLFIILNLFI), 225–245 (GAVSGLFLIGYGALRIIVEFF), and 260–280 (ISMGQILSIPMIIAGAIMMVW). Residue arginine 143 coordinates a 1,2-diacyl-sn-glycero-3-phospho-(1'-sn-glycerol).

Belongs to the Lgt family.

The protein localises to the cell inner membrane. The enzyme catalyses L-cysteinyl-[prolipoprotein] + a 1,2-diacyl-sn-glycero-3-phospho-(1'-sn-glycerol) = an S-1,2-diacyl-sn-glyceryl-L-cysteinyl-[prolipoprotein] + sn-glycerol 1-phosphate + H(+). The protein operates within protein modification; lipoprotein biosynthesis (diacylglyceryl transfer). In terms of biological role, catalyzes the transfer of the diacylglyceryl group from phosphatidylglycerol to the sulfhydryl group of the N-terminal cysteine of a prolipoprotein, the first step in the formation of mature lipoproteins. The protein is Phosphatidylglycerol--prolipoprotein diacylglyceryl transferase of Salmonella choleraesuis (strain SC-B67).